The sequence spans 166 residues: Protein SprT (166 aa).

Residues 19–164 (RDALARANLK…CVRCGDTLVA (146 aa)) form the SprT-like domain. Residue His-78 coordinates Zn(2+). Residue Glu-79 is part of the active site. His-82 contributes to the Zn(2+) binding site.

Belongs to the SprT family. It depends on Zn(2+) as a cofactor.

The protein localises to the cytoplasm. The protein is Protein SprT of Cronobacter sakazakii (strain ATCC BAA-894) (Enterobacter sakazakii).